The sequence spans 89 residues: MALDVQEKAQIVADYQQAVGDTGSPEVQVALLTANINKLQGHFKANGKDHHSRRGLIRMVNQRRKLLDYLKGKDVSRYSALIARLGLRR.

This sequence belongs to the universal ribosomal protein uS15 family. In terms of assembly, part of the 30S ribosomal subunit. Forms a bridge to the 50S subunit in the 70S ribosome, contacting the 23S rRNA.

One of the primary rRNA binding proteins, it binds directly to 16S rRNA where it helps nucleate assembly of the platform of the 30S subunit by binding and bridging several RNA helices of the 16S rRNA. Its function is as follows. Forms an intersubunit bridge (bridge B4) with the 23S rRNA of the 50S subunit in the ribosome. The polypeptide is Small ribosomal subunit protein uS15 (Pseudomonas fluorescens (strain Pf0-1)).